A 738-amino-acid polypeptide reads, in one-letter code: Putative RNA-binding protein EEED8.10 (738 aa).

The 90-residue stretch at 112–201 (RKIVVSNISA…QVMVVSAYVS (90 aa)) folds into the RRM domain. Residues 211–237 (LSDDVGSREDTPLSRASSTQSLASGSE) form a disordered region. A compositionally biased stretch (polar residues) spans 224–237 (SRASSTQSLASGSE). The F-box domain occupies 239–297 (SFNLGNVPDKILRRVISFLPIHETIRLERVNKKFMEESIKSWELVNKIALARETVFNKQ).

This is Putative RNA-binding protein EEED8.10 from Caenorhabditis elegans.